The sequence spans 352 residues: Lipid storage droplets surface-binding protein 2 (352 aa).

Disordered stretches follow at residues 1-28 (MASA…DQPK) and 298-352 (NVEQ…VSSQ). Residues 298 to 309 (NVEQSGGSSSDA) show a composition bias toward polar residues. A compositionally biased stretch (low complexity) spans 315–329 (TTTSTTTTTTTSSTS).

The protein belongs to the perilipin family. As to expression, ubiquitous expression in early embryos. At stage 5 expression is restricted to the pole cells. At stage 11 expression is seen in the amnioserosa, refined to the fat body and midgut by stage 14. Also seen in the hindgut by the end of embryogenesis. Expression is seen in larval fat body (at protein level).

It localises to the cytoplasm. It is found in the lipid droplet. Essential for embryogenesis. Required for normal deposition of neutral lipids in the oocyte. The protein is Lipid storage droplets surface-binding protein 2 of Drosophila melanogaster (Fruit fly).